Here is a 170-residue protein sequence, read N- to C-terminus: Putative pre-16S rRNA nuclease (170 aa).

The segment at 1–25 is disordered; that stretch reads MVPAQHRPPDRPGDPAHDPGRGRRL. Positions 7–21 are enriched in basic and acidic residues; that stretch reads RPPDRPGDPAHDPGR.

This sequence belongs to the YqgF nuclease family.

Its subcellular location is the cytoplasm. Its function is as follows. Could be a nuclease involved in processing of the 5'-end of pre-16S rRNA. This chain is Putative pre-16S rRNA nuclease, found in Mycobacterium tuberculosis (strain ATCC 25177 / H37Ra).